We begin with the raw amino-acid sequence, 594 residues long: Cytosolic Fe-S cluster assembly factor NAR1 (594 aa).

Residues cysteine 20, cysteine 88, cysteine 91, cysteine 94, cysteine 209, and cysteine 264 each contribute to the [4Fe-4S] cluster site. Residues 444 to 465 are disordered; that stretch reads RRARMSKSEDSSGASASSMAPA. Low complexity predominate over residues 454 to 465; it reads SSGASASSMAPA. The [4Fe-4S] cluster site is built by cysteine 481 and cysteine 485. The disordered stretch occupies residues 492 to 511; sequence IAAPAPTSTPPAAPAPAHAA.

Belongs to the NARF family.

Its function is as follows. Component of the cytosolic Fe/S protein assembly machinery. Required for maturation of extramitochondrial Fe/S proteins. May play a role in the transfer of pre-assembled Fe/S clusters to target apoproteins. The chain is Cytosolic Fe-S cluster assembly factor NAR1 (NAR1) from Lodderomyces elongisporus (strain ATCC 11503 / CBS 2605 / JCM 1781 / NBRC 1676 / NRRL YB-4239) (Yeast).